A 246-amino-acid chain; its full sequence is Hydroxyacylglutathione hydrolase (246 aa).

The Zn(2+) site is built by histidine 58, histidine 60, aspartate 62, histidine 63, histidine 117, aspartate 137, and histidine 175.

Belongs to the metallo-beta-lactamase superfamily. Glyoxalase II family. In terms of assembly, monomer. Requires Zn(2+) as cofactor.

It catalyses the reaction an S-(2-hydroxyacyl)glutathione + H2O = a 2-hydroxy carboxylate + glutathione + H(+). It participates in secondary metabolite metabolism; methylglyoxal degradation; (R)-lactate from methylglyoxal: step 2/2. Functionally, thiolesterase that catalyzes the hydrolysis of S-D-lactoyl-glutathione to form glutathione and D-lactic acid. The chain is Hydroxyacylglutathione hydrolase from Prochlorococcus marinus (strain MIT 9301).